A 616-amino-acid polypeptide reads, in one-letter code: GPI mannosyltransferase 3 (616 aa).

Residues 1–16 (MAHEVHRIKPKLGRTQ) lie on the Cytoplasmic side of the membrane. The helical transmembrane segment at 17-37 (IFWVFLAFRVLNAVLTRTFFQ) threads the bilayer. Topologically, residues 38-86 (ADEFWQALEPAHWKAFKYGELTWEWKFGVRSYLFPMIFELTYRLVSLSS) are lumenal. Residues 87 to 107 (ILLHYALLLLSTIGSDLLILL) form a helical membrane-spanning segment. The Cytoplasmic segment spans residues 108 to 136 (LPKYELSWQVAEDLKRLPFDVTRSFEYYG). A helical membrane pass occupies residues 137-157 (VIYAPKIVMAVLASIGEYYIV). Over 158–188 (RFVQKLYLLTLDKRNEKEEEERRSGLSEITK) the chain is Lumenal. A helical membrane pass occupies residues 189-209 (FALLLSLTNFFNCFFITRTFI). The Cytoplasmic portion of the chain corresponds to 210–240 (NSFEMILTSIALYYWDWTGGQMIKESSFTKS). Residues 241 to 261 (LIFAFLACLQRPSSGLIWVIP) traverse the membrane as a helical segment. At 262 to 278 (SISLILNLVGKKQYHLL) the chain is on the lumenal side. The chain crosses the membrane as a helical span at residues 279-299 (FITFSKVLRSFFLVFTANAII). Residues 300-338 (DMYFYEKVTFPFFRFLKFNFTTPLSKFYGVAPWHFHFFQ) are Cytoplasmic-facing. A helical membrane pass occupies residues 339 to 359 (SLPIVLGASIPAFAFGLFFPL). Residues 360-392 (SKRSFPKKYLNPFFQVKLTILLNLLVYSTLPHK) lie on the Lumenal side of the membrane. The chain crosses the membrane as a helical span at residues 393–413 (EFRFIFPLQPLFILISSFGLL). At 414–423 (RLDRDYWKRL) the chain is on the cytoplasmic side. The chain crosses the membrane as a helical span at residues 424–444 (SGLKSLLWLVPFVSVFIALLL). The Lumenal portion of the chain corresponds to 445–616 (DTFHESGSIE…DYSDIPAADI (172 aa)).

This sequence belongs to the glycosyltransferase 22 family. PIGB subfamily.

Its subcellular location is the endoplasmic reticulum membrane. It participates in glycolipid biosynthesis; glycosylphosphatidylinositol-anchor biosynthesis. In terms of biological role, mannosyltransferase involved in glycosylphosphatidylinositol-anchor biosynthesis. Transfers the third mannose to Man2-GlcN-acyl-PI during GPI precursor assembly. This chain is GPI mannosyltransferase 3 (GPI10), found in Saccharomyces cerevisiae (strain ATCC 204508 / S288c) (Baker's yeast).